The primary structure comprises 294 residues: Small ribosomal subunit protein uS3 (294 aa).

The KH type-2 domain maps to 39–107 (VREYLKTKLK…PVAVNIEEVR (69 aa)). The interval 210–294 (RNDLPAVETP…AAPAADVKGE (85 aa)) is disordered. Positions 219–238 (PRPDEERRPRGPRRDGRPGG) are enriched in basic and acidic residues. Composition is skewed to low complexity over residues 249 to 258 (RPAAGNSAPA) and 281 to 294 (VAAP…VKGE).

It belongs to the universal ribosomal protein uS3 family. In terms of assembly, part of the 30S ribosomal subunit. Forms a tight complex with proteins S10 and S14.

In terms of biological role, binds the lower part of the 30S subunit head. Binds mRNA in the 70S ribosome, positioning it for translation. This Verminephrobacter eiseniae (strain EF01-2) protein is Small ribosomal subunit protein uS3.